The chain runs to 514 residues: CENP-B homolog protein 1 (514 aa).

One can recognise an HTH CENPB-type domain in the interval 69 to 144 (DIKKIRAPKF…RRRHYIQQSA (76 aa)).

It localises to the nucleus. Its subcellular location is the chromosome. It is found in the centromere. Functionally, binds to centromeric K-type repeat DNA and ARS3002 DNA. The CBH-binding consensus sequence is Py-Pu-A-T-A-T-Py-Pu-T-A. The sequence is that of CENP-B homolog protein 1 (cbh1) from Schizosaccharomyces pombe (strain 972 / ATCC 24843) (Fission yeast).